Reading from the N-terminus, the 90-residue chain is MAKGQSLQEPFLNTLRKEKVPVSIYLVNGIKLQGQIESFDQFVVLLRNNVNQMVYKHAISTIVPARRVRLPQQGEEASAESIVGEEESNN.

The region spanning 9-68 (EPFLNTLRKEKVPVSIYLVNGIKLQGQIESFDQFVVLLRNNVNQMVYKHAISTIVPARRV) is the Sm domain.

The protein belongs to the Hfq family. In terms of assembly, homohexamer.

In terms of biological role, RNA chaperone that binds small regulatory RNA (sRNAs) and mRNAs to facilitate mRNA translational regulation in response to envelope stress, environmental stress and changes in metabolite concentrations. Also binds with high specificity to tRNAs. This chain is RNA-binding protein Hfq, found in Halorhodospira halophila (strain DSM 244 / SL1) (Ectothiorhodospira halophila (strain DSM 244 / SL1)).